Here is a 59-residue protein sequence, read N- to C-terminus: DNA-directed RNA polymerase subunit Rpo6 (59 aa).

The protein belongs to the archaeal Rpo6/eukaryotic RPB6 RNA polymerase subunit family. Part of the RNA polymerase complex.

It is found in the cytoplasm. The catalysed reaction is RNA(n) + a ribonucleoside 5'-triphosphate = RNA(n+1) + diphosphate. Functionally, DNA-dependent RNA polymerase (RNAP) catalyzes the transcription of DNA into RNA using the four ribonucleoside triphosphates as substrates. This is DNA-directed RNA polymerase subunit Rpo6 from Halorubrum lacusprofundi (strain ATCC 49239 / DSM 5036 / JCM 8891 / ACAM 34).